The primary structure comprises 218 residues: Zinc finger CCHC-type and RNA-binding motif-containing protein 1 (218 aa).

An RRM domain is found at 10–88; sequence STVYVSNLPF…RAIKASIAKD (79 aa). The CCHC-type zinc finger occupies 105-122; it reads SRCYECGDTGHLSYACPK. Residues 119-218 form a disordered region; the sequence is ACPKNMLGER…YFSDEDELSD (100 aa). A coiled-coil region spans residues 132-188; that stretch reads QKKEKKKRKRLVEEEEEEVVEEEESEDEGEDPALDSLSQAIAFQQARIDEEKNKYRH. Acidic residues predominate over residues 144–164; sequence EEEEEEVVEEEESEDEGEDPA. Positions 178-201 are enriched in basic and acidic residues; sequence RIDEEKNKYRHDPAEASTSEDSRR.

In terms of assembly, component of the U11/U12 snRNPs that are part of the U12-type spliceosome.

The protein resides in the nucleus. The protein is Zinc finger CCHC-type and RNA-binding motif-containing protein 1 (zcrb1) of Xenopus laevis (African clawed frog).